Reading from the N-terminus, the 553-residue chain is Pseudouridylate synthase RPUSD2 (553 aa).

The tract at residues alanine 76–serine 135 is disordered. Aspartate 287 is a catalytic residue. Threonine 490 carries the phosphothreonine modification.

The protein belongs to the pseudouridine synthase RluA family.

The catalysed reaction is a uridine in mRNA = a pseudouridine in mRNA. Pseudouridine synthase that catalyzes pseudouridylation of mRNAs. This is Pseudouridylate synthase RPUSD2 from Mus musculus (Mouse).